The sequence spans 87 residues: UPF0367 protein Syncc9902_0316 (87 aa).

This sequence belongs to the UPF0367 family.

The polypeptide is UPF0367 protein Syncc9902_0316 (Synechococcus sp. (strain CC9902)).